The sequence spans 121 residues: Aspartate 1-decarboxylase (121 aa).

Serine 25 functions as the Schiff-base intermediate with substrate; via pyruvic acid in the catalytic mechanism. Serine 25 carries the pyruvic acid (Ser) modification. Threonine 57 is a binding site for substrate. Tyrosine 58 acts as the Proton donor in catalysis. 73-75 provides a ligand contact to substrate; it reads GAA.

The protein belongs to the PanD family. Heterooctamer of four alpha and four beta subunits. Requires pyruvate as cofactor. Is synthesized initially as an inactive proenzyme, which is activated by self-cleavage at a specific serine bond to produce a beta-subunit with a hydroxyl group at its C-terminus and an alpha-subunit with a pyruvoyl group at its N-terminus.

It is found in the cytoplasm. The catalysed reaction is L-aspartate + H(+) = beta-alanine + CO2. It participates in cofactor biosynthesis; (R)-pantothenate biosynthesis; beta-alanine from L-aspartate: step 1/1. In terms of biological role, catalyzes the pyruvoyl-dependent decarboxylation of aspartate to produce beta-alanine. This Sulfurimonas denitrificans (strain ATCC 33889 / DSM 1251) (Thiomicrospira denitrificans (strain ATCC 33889 / DSM 1251)) protein is Aspartate 1-decarboxylase.